A 187-amino-acid chain; its full sequence is Phosphatidylethanolamine-binding protein 1 (187 aa).

Serine 13 carries the post-translational modification Phosphoserine. Threonine 42 carries the post-translational modification Phosphothreonine. Phosphoserine is present on residues serine 52, serine 98, and serine 153. Positions 93-134 (KGNDISSGTVLSDYVGSGPPKGTGLHRYVWLVYEQSGPLKCD) are interaction with RAF1.

Belongs to the phosphatidylethanolamine-binding protein family. As to quaternary structure, has a tendency to form dimers by disulfide cross-linking. Interacts with RAF1 and this interaction is enhanced if RAF1 is phosphorylated on residues 'Ser-338', 'Ser-339', 'Tyr-340' and 'Tyr-341'. Interacts with ALOX15; in response to IL13/interleukin-13, prevents the interaction of PEBP1 with RAF1 to activate the ERK signaling cascade.

It localises to the cytoplasm. In terms of biological role, binds ATP, opioids and phosphatidylethanolamine. Has lower affinity for phosphatidylinositol and phosphatidylcholine. Serine protease inhibitor which inhibits thrombin, neuropsin and chymotrypsin but not trypsin, tissue type plasminogen activator and elastase. Involved in the positive regulation of epithelial cell migration. Inhibits the kinase activity of RAF1 by inhibiting its activation and by dissociating the RAF1/MEK complex and acting as a competitive inhibitor of MEK phosphorylation. Its function is as follows. HCNP may be involved in the function of the presynaptic cholinergic neurons of the central nervous system. HCNP increases the production of choline acetyltransferase but not acetylcholinesterase. Seems to be mediated by a specific receptor. This is Phosphatidylethanolamine-binding protein 1 (PEBP1) from Canis lupus familiaris (Dog).